Here is a 582-residue protein sequence, read N- to C-terminus: Ubiquilin-1 (582 aa).

Disordered stretches follow at residues 1–26 (MAES…AEPK) and 102–136 (RPQD…AANS). A2 is modified (N-acetylalanine). Residues 28–102 (MKVTVKTPKE…VHLVIKTQNR (75 aa)) form the Ubiquitin-like domain. The span at 102–135 (RPQDNSAQQTNTTGNSVTSSPAPDSNPTSGPAAN) shows a compositional bias: polar residues. The segment at 169–422 (QLLSNPEMMV…LNNPLFAGNP (254 aa)) is interaction with UBXN4. 2 consecutive STI1 domains span residues 173-201 (NPEM…QLIM) and 203-242 (NPQM…MQEM). The tract at residues 285–365 (NPFASLVSSP…NLVPGAGASM (81 aa)) is disordered. The span at 290-304 (LVSSPSSAEGTQPSR) shows a compositional bias: polar residues. Residues 318–346 (QTPQSSPASGSTGSTTNTVSTSAGNATST) are compositionally biased toward low complexity. STI1 domains are found at residues 381–428 (NPQL…QEQM) and 432–464 (LPTF…QQGL). Positions 481–513 (GLAAGNSGGPAGTTAPSTAPGEDTNPQGGAAEP) are disordered. Residues 539-579 (RFQQQLEQLSAMGFLNREANLQALIATGGDINAAIERLLGS) enclose the UBA domain.

As to quaternary structure, monomer and homodimer. Heterodimer with UBQLN2. Binds CD47. Binds NBL1. Binds GABRA1, GABRA2, GABRA3, GABRA6, GABRB1, GABRB2 and GABRB3. Binds UBE3A, BTRC, P4HB and MTOR. Interacts with the proteasome 19S subunit. Interacts (via ubiquitin-like domain) with TREX1; the interaction is direct and may control TREX1 subcellular location. Forms a complex with UBXN4 and VCP. Interacts (via UBA domain) with UBQLN4 (via ubiquitin-like domain). Found in a complex with UBQLN2 and MAP1LC3A/B/C. The monomeric form interacts with PSEN1 and PSEN2. Interacts with ORAI1. Interacts (via UBA domain) with TICAM1. Interacts with EPS15. Interacts (via UBA domain) with UBA52 and (via ubiquitin-like domain) with PSMD3 and PSMD4. Interacts with HERPUD1. Interacts with MAP1LC3A/B/C in the presence of UBQLN4. Interacts (via ubiquitin-like domain) with EPS15 (via UIM domains) and both the ubiquitinated and non-ubiquitinated forms can interact with EPS15. Interacts (via ubiquitin-like domain) with EPS15L1, HGS (via UIM domain) and STAM2 (via UIM domain). Interacts with BCL2L10/BCL-B; in the cytoplasm. In terms of processing, degraded during both macroautophagy and during chaperone-mediated autophagy (CMA). Phosphorylated. Post-translationally, ubiquitinated.

It is found in the nucleus. It localises to the cytoplasm. The protein localises to the endoplasmic reticulum. The protein resides in the cytoplasmic vesicle. Its subcellular location is the autophagosome. It is found in the cell membrane. Functionally, plays an important role in the regulation of different protein degradation mechanisms and pathways including ubiquitin-proteasome system (UPS), autophagy and endoplasmic reticulum-associated protein degradation (ERAD) pathway. Mediates the proteasomal targeting of misfolded or accumulated proteins for degradation by binding (via UBA domain) to their polyubiquitin chains and by interacting (via ubiquitin-like domain) with the subunits of the proteasome. Plays a role in the ERAD pathway via its interaction with ER-localized proteins UBXN4, VCP and HERPUD1 and may form a link between the polyubiquitinated ERAD substrates and the proteasome. Plays a role in unfolded protein response (UPR) by attenuating the induction of UPR-inducible genes, DDTI3/CHOP, HSPA5 and PDIA2 during ER stress. Involved in the regulation of macroautophagy and autophagosome formation; required for maturation of autophagy-related protein LC3 from the cytosolic form LC3-I to the membrane-bound form LC3-II and may assist in the maturation of autophagosomes to autolysosomes by mediating autophagosome-lysosome fusion. Negatively regulates the TICAM1/TRIF-dependent toll-like receptor signaling pathway by decreasing the abundance of TICAM1 via the autophagic pathway. Promotes the ubiquitination and lysosomal degradation of ORAI1, consequently down-regulating the ORAI1-mediated Ca2+ mobilization. Suppresses the maturation and proteasomal degradation of amyloid beta A4 protein (A4) by stimulating the lysine 63 (K63)-linked polyubiquitination. Delays the maturation of A4 by sequestering it in the Golgi apparatus and preventing its transport to the cell surface for subsequent processing. Promotes the surface expression of GABA-A receptors. Ubiquitinates BCL2L10 and thereby stabilizes protein abundance. The protein is Ubiquilin-1 (Ubqln1) of Rattus norvegicus (Rat).